We begin with the raw amino-acid sequence, 341 residues long: MDLKSKFMEVYYKLKSELLNDPAFEFTDDSRQWVEQMLDYNVPGGKLNRGLSVIDSYQILKGGKELTEEEIFLTSALGWCIEWLQAYFLVLDDIMDNSVTRRGQPCWFRVPKVGLIAANDGILLRNHIPRILKKHFKGKSYYVDLLDLFNEVEFQTASGQMIDLITTIEGEKDLSKYSIPLHHRIVQYKTAYYSFYLPVACALVMAGENLDNHVDVKNILIEMGTYFQVQDDYLDCFGHPDVIGKIGTDIEDFKCSWLVVKALEIVTDEQKKLLFEHYGKADEASVKKVKELYKTLDLEGVFADYESTSYQKLNKSIEAHPKKEVQAVLKSFLAKIYKRQK.

Residues lysine 46, arginine 49, and glutamine 85 each coordinate isopentenyl diphosphate. Mg(2+)-binding residues include aspartate 92 and aspartate 96. Arginine 101 is a dimethylallyl diphosphate binding site. Isopentenyl diphosphate is bound at residue arginine 102. Residues lysine 189, threonine 190, glutamine 228, lysine 245, and lysine 254 each contribute to the dimethylallyl diphosphate site.

It belongs to the FPP/GGPP synthase family. The cofactor is Mg(2+). Mainly expressed in trichomes, roots and flowers, and, to a lower extent, in leaves and stems.

It is found in the cytoplasm. The protein localises to the nucleus. The catalysed reaction is isopentenyl diphosphate + dimethylallyl diphosphate = (2E)-geranyl diphosphate + diphosphate. The enzyme catalyses isopentenyl diphosphate + (2E)-geranyl diphosphate = (2E,6E)-farnesyl diphosphate + diphosphate. It functions in the pathway isoprenoid biosynthesis; farnesyl diphosphate biosynthesis; farnesyl diphosphate from geranyl diphosphate and isopentenyl diphosphate: step 1/1. It participates in sesquiterpene biosynthesis. The protein operates within isoprenoid biosynthesis; geranyl diphosphate biosynthesis; geranyl diphosphate from dimethylallyl diphosphate and isopentenyl diphosphate: step 1/1. Catalyzes the sequential condensation of isopentenyl pyrophosphate with the allylic pyrophosphates, dimethylallyl pyrophosphate, and then with the resultant geranylpyrophosphate to the ultimate product farnesyl pyrophosphate. The protein is Farnesyl pyrophosphate synthase 2 of Cannabis sativa (Hemp).